A 1021-amino-acid polypeptide reads, in one-letter code: Collagenase ColH (1021 aa).

A signal peptide spans 1–30 (MKRKCLSKRLMLAITMATIFTVNSTLPIYA). A propeptide spanning residues 31-40 (AVDKNNATAA) is cleaved from the precursor. The tract at residues 41 to 320 (VQNESKRYTV…SADQIKRHYD (280 aa)) is activator domain. The S1 metalloprotease domain stretch occupies residues 41-717 (VQNESKRYTV…TYDVVFHGYL (677 aa)). The catalytic subdomain stretch occupies residues 330-601 (PLDKFKKEGK…MQERIDNYEN (272 aa)). Residue Asp421 coordinates Zn(2+). Glu430 contacts Ca(2+). His455 serves as a coordination point for Zn(2+). Residue Glu456 is part of the active site. Residue His459 coordinates Zn(2+). Ca(2+)-binding residues include Gly463, Val467, and Gly469. Glu487 is a binding site for Zn(2+). Residues 609-721 (DDYLVRHAYK…VFHGYLPNEG (113 aa)) are helper subdomain. Residues 718–810 (PNEGDSKNSL…VSTTTAEIKD (93 aa)) form an S2a domain region. Residues Asn725, Ser726, Asp753, Asp755, Asp794, Asn814, Lys815, Asp842, Asp844, Asp884, Glu908, Glu910, Asn912, Asn913, Thr931, Asp937, Gln938, and Asp939 each coordinate Ca(2+). A PKD 1 domain is found at 727–808 (LPYGKINGTY…SSVSTTTAEI (82 aa)). Positions 811–904 (LSENKLPVIY…KIKITDPVYP (94 aa)) are S2b domain. Positions 816-905 (LPVIYMHVPK…IKITDPVYPI (90 aa)) constitute a PKD 2 domain. The disordered stretch occupies residues 903–922 (YPIGTEKEPNNSKETASGPI). The S3 collagen-binding domain stretch occupies residues 905–1021 (IGTEKEPNNS…RINIEGSVGR (117 aa)). Residues 1002–1004 (YMF) form a collagen-binding region.

This sequence belongs to the peptidase M9B family. Collagenase subfamily. It depends on Ca(2+) as a cofactor. Zn(2+) serves as cofactor. Upon purification gives rise to 98 kDa, 105 kDa and 116 kDa (full-length) proteins, all of which have the same N-terminus.

It localises to the secreted. The catalysed reaction is Digestion of native collagen in the triple helical region at Xaa-|-Gly bonds. With synthetic peptides, a preference is shown for Gly at P3 and P1', Pro and Ala at P2 and P2', and hydroxyproline, Ala or Arg at P3'.. Its activity is regulated as follows. Inhibited by EDTA. Inhibited by 1-10-phenanthroline. Inhibited by broad-spectrum zinc metalloprotease inhibitor batimastat. N-aryl mercaptoacetamide-based inhibitors have been isolated that act on clostridial collagenases with submicromolar affinity while having negligibile activity on human collagenases. Clostridial collagenases are among the most efficient degraders of eukaryotic collagen known; saprophytes use collagen as a carbon source while pathogens additionally digest collagen to aid in host colonization. Has both tripeptidylcarboxypeptidase on Gly-X-Y and endopeptidase activities; the endopeptidase cuts within the triple helix region of collagen while tripeptidylcarboxypeptidase successively digests the exposed ends, thus clostridial collagenases can digest large sections of collagen. The full-length protein has collagenase activity, while both the 116 kDa and 98 kDa forms act on gelatin. In vitro digestion of soluble calf skin collagen fibrils requires both ColG and ColH; ColG forms missing the second collagen-binding domain is also synergistic with ColH, although their overall efficiency is decreased. Digestion of collagen requires Ca(2+) and is inhibited by EDTA. The activator domain (residues 119-388) and catalytic subdomain (330-601) open and close around substrate allowing digestion when the protein is closed. The sequence is that of Collagenase ColH from Hathewaya histolytica (Clostridium histolyticum).